The chain runs to 309 residues: MSSVLRLLGRRICNPAAEKVRLSSSLSGGGDFPILNGHKAAQDLSKDTLKSQDITKEKEGQHKEVKKEFKIYRWNPDKPNSKPFLQSFFVDLSSCGPMVLDVLQKIKAEDDASLSYRRSCREGICGSCSMNIDGTNTVACLKPINPNTSKPTIITPLPHMYVIKDLVVDLTNFYQQYKSMEPWLKTRKPPKDGREHRQSPKDRKKLDGLYECILCACCTTSCPSYWWNPEEFPGPAALLQAYRWISDSRDEYREERLQAITESETKVYRCRAIKNCTATCPKGLNPASAILKMKSKHLLSDPLVRTESV.

The N-terminal 22 residues, 1–22 (MSSVLRLLGRRICNPAAEKVRL), are a transit peptide targeting the mitochondrion. The 2Fe-2S ferredoxin-type domain occupies 69–160 (FKIYRWNPDK…PTIITPLPHM (92 aa)). Residues Cys-120, Cys-125, and Cys-140 each contribute to the [2Fe-2S] cluster site. The 31-residue stretch at 202–232 (DRKKLDGLYECILCACCTTSCPSYWWNPEEF) folds into the 4Fe-4S ferredoxin-type domain. The [4Fe-4S] cluster site is built by Cys-212, Cys-215, and Cys-218. A [3Fe-4S] cluster-binding site is contributed by Cys-222. Trp-227 is an a ubiquinone binding site. 2 residues coordinate [3Fe-4S] cluster: Cys-270 and Cys-276. Cys-280 is a binding site for [4Fe-4S] cluster.

This sequence belongs to the succinate dehydrogenase/fumarate reductase iron-sulfur protein family. Component of complex II composed of eight subunits in plants: four classical SDH subunits SDH1, SDH2, SDH3 and SDH4 (a flavoprotein (FP), an iron-sulfur protein (IP), and a cytochrome b composed of a large and a small subunit.), as well as four subunits unknown in mitochondria from bacteria and heterotrophic eukaryotes. [2Fe-2S] cluster serves as cofactor. The cofactor is [3Fe-4S] cluster. [4Fe-4S] cluster is required as a cofactor.

It is found in the mitochondrion inner membrane. The enzyme catalyses a quinone + succinate = fumarate + a quinol. Its pathway is carbohydrate metabolism; tricarboxylic acid cycle; fumarate from succinate (eukaryal route): step 1/1. Functionally, iron-sulfur protein (IP) subunit of succinate dehydrogenase (SDH) that is involved in complex II of the mitochondrial electron transport chain and is responsible for transferring electrons from succinate to ubiquinone (coenzyme Q). The sequence is that of Succinate dehydrogenase [ubiquinone] iron-sulfur subunit 3, mitochondrial (SDH2-3) from Arabidopsis thaliana (Mouse-ear cress).